Consider the following 443-residue polypeptide: ASTRA-associated protein 1 (443 aa).

4 WD repeats span residues 23 to 67, 71 to 110, 258 to 295, and 318 to 359; these read YHKR…PITH, EGNS…QLSI, HYPN…QLET, and KVHL…VEQT. Positions 372-391 are disordered; sequence SSMGDLTNGSGSNTESSSKS. Over residues 378-391 the composition is skewed to low complexity; the sequence is TNGSGSNTESSSKS.

The protein belongs to the WD repeat ASA1 family. In terms of assembly, component of the ASTRA chromatin remodeling machinery complex composed of at least RVB1, RVB2, TRA1, TEL2, TTI1 and TTI2.

The protein resides in the nucleus. Functionally, component of the ASTRA complex involved in chromatin remodeling. This is ASTRA-associated protein 1 (ASA1) from Saccharomyces cerevisiae (strain RM11-1a) (Baker's yeast).